The chain runs to 477 residues: Aryl-phospho-beta-D-glucosidase BglC (477 aa).

E170 (proton donor) is an active-site residue. The Nucleophile role is filled by E378.

This sequence belongs to the glycosyl hydrolase 1 family.

It carries out the reaction 6-phospho-beta-D-glucosyl-(1-&gt;4)-D-glucose + H2O = D-glucose 6-phosphate + D-glucose. Its function is as follows. Is able to catalyze the hydrolysis of aryl-phospho-beta-D-glucosides such as 4-methylumbelliferyl-phospho-beta-D-glucopyranoside (MUG-P), phosphoarbutin and phosphosalicin. Is not essential for growth on arbutin and salicin as the sole carbon source. This is Aryl-phospho-beta-D-glucosidase BglC (bglC) from Bacillus subtilis (strain 168).